We begin with the raw amino-acid sequence, 353 residues long: Serine proteinase inhibitor 1 (353 aa).

This sequence belongs to the serpin family. Poxviruses subfamily.

It localises to the host cytoplasm. Functionally, plays a role in mediating viral host range. May act to inhibit a caspase independent form of apoptosis to allow efficient virus replication in infected cells. In Vaccinia virus (strain Copenhagen) (VACV), this protein is Serine proteinase inhibitor 1 (OPG208).